Reading from the N-terminus, the 328-residue chain is Arabinose 5-phosphate isomerase KdsD (328 aa).

Residues 41–184 form the SIS domain; that stretch reads ACEKMFNCTG…AVALLKARGF (144 aa). Substrate-binding positions include 75 to 76, H82, H88, 114 to 123, and 148 to 150; these read GT, ALIPVLKRLH, and KVP. Residue H82 coordinates Zn(2+). In terms of domain architecture, CBS 1 spans 210–268; that stretch reads MHTGDEIPHVNKHATLRDALLEITRKNLGMTVICDESMKIDGIFTDGDLRRMFDMGGDM. E275 provides a ligand contact to substrate. In terms of domain architecture, CBS 2 spans 277-328; sequence MTPGGIRVRPGILAVDALNLMQSRHITSVLVADGDQLLGVLHMHDLLRAGVV.

The protein belongs to the SIS family. GutQ/KpsF subfamily. In terms of assembly, homotetramer.

The enzyme catalyses D-arabinose 5-phosphate = D-ribulose 5-phosphate. The protein operates within carbohydrate biosynthesis; 3-deoxy-D-manno-octulosonate biosynthesis; 3-deoxy-D-manno-octulosonate from D-ribulose 5-phosphate: step 1/3. It functions in the pathway bacterial outer membrane biogenesis; lipopolysaccharide biosynthesis. Functionally, involved in the biosynthesis of 3-deoxy-D-manno-octulosonate (KDO), a unique 8-carbon sugar component of lipopolysaccharides (LPSs). Catalyzes the reversible aldol-ketol isomerization between D-ribulose 5-phosphate (Ru5P) and D-arabinose 5-phosphate (A5P). The sequence is that of Arabinose 5-phosphate isomerase KdsD (kdsD) from Salmonella typhi.